The primary structure comprises 258 residues: Imidazole glycerol phosphate synthase subunit HisF (258 aa).

Catalysis depends on residues D11 and D130.

The protein belongs to the HisA/HisF family. In terms of assembly, heterodimer of HisH and HisF.

The protein resides in the cytoplasm. The catalysed reaction is 5-[(5-phospho-1-deoxy-D-ribulos-1-ylimino)methylamino]-1-(5-phospho-beta-D-ribosyl)imidazole-4-carboxamide + L-glutamine = D-erythro-1-(imidazol-4-yl)glycerol 3-phosphate + 5-amino-1-(5-phospho-beta-D-ribosyl)imidazole-4-carboxamide + L-glutamate + H(+). It participates in amino-acid biosynthesis; L-histidine biosynthesis; L-histidine from 5-phospho-alpha-D-ribose 1-diphosphate: step 5/9. IGPS catalyzes the conversion of PRFAR and glutamine to IGP, AICAR and glutamate. The HisF subunit catalyzes the cyclization activity that produces IGP and AICAR from PRFAR using the ammonia provided by the HisH subunit. This is Imidazole glycerol phosphate synthase subunit HisF from Synechococcus sp. (strain CC9902).